The following is a 213-amino-acid chain: Probable septum site-determining protein MinC (213 aa).

Belongs to the MinC family. In terms of assembly, interacts with MinD and FtsZ.

Its function is as follows. Cell division inhibitor that blocks the formation of polar Z ring septums. Rapidly oscillates between the poles of the cell to destabilize FtsZ filaments that have formed before they mature into polar Z rings. Prevents FtsZ polymerization. The sequence is that of Probable septum site-determining protein MinC from Pseudothermotoga lettingae (strain ATCC BAA-301 / DSM 14385 / NBRC 107922 / TMO) (Thermotoga lettingae).